The primary structure comprises 399 residues: Methylthioribose kinase (399 aa).

ATP-binding positions include Asn40, Lys57, and 111–113; that span reads EDL. Asp229 contacts substrate. 246–248 is an ATP binding site; the sequence is DAE. Arg344 serves as a coordination point for substrate.

It belongs to the methylthioribose kinase family. In terms of assembly, homodimer.

The enzyme catalyses 5-(methylsulfanyl)-D-ribose + ATP = 5-(methylsulfanyl)-alpha-D-ribose 1-phosphate + ADP + H(+). Its pathway is amino-acid biosynthesis; L-methionine biosynthesis via salvage pathway; S-methyl-5-thio-alpha-D-ribose 1-phosphate from S-methyl-5'-thioadenosine (hydrolase route): step 2/2. Functionally, catalyzes the phosphorylation of methylthioribose into methylthioribose-1-phosphate. The protein is Methylthioribose kinase of Cronobacter sakazakii (strain ATCC BAA-894) (Enterobacter sakazakii).